The following is a 505-amino-acid chain: ATP synthase subunit alpha (505 aa).

Residue 169–176 participates in ATP binding; it reads GDRQTGKT.

The protein belongs to the ATPase alpha/beta chains family. In terms of assembly, F-type ATPases have 2 components, CF(1) - the catalytic core - and CF(0) - the membrane proton channel. CF(1) has five subunits: alpha(3), beta(3), gamma(1), delta(1), epsilon(1). CF(0) has three main subunits: a(1), b(2) and c(9-12). The alpha and beta chains form an alternating ring which encloses part of the gamma chain. CF(1) is attached to CF(0) by a central stalk formed by the gamma and epsilon chains, while a peripheral stalk is formed by the delta and b chains.

It is found in the cell membrane. It catalyses the reaction ATP + H2O + 4 H(+)(in) = ADP + phosphate + 5 H(+)(out). In terms of biological role, produces ATP from ADP in the presence of a proton gradient across the membrane. The alpha chain is a regulatory subunit. The protein is ATP synthase subunit alpha of Clostridium acetobutylicum (strain ATCC 824 / DSM 792 / JCM 1419 / IAM 19013 / LMG 5710 / NBRC 13948 / NRRL B-527 / VKM B-1787 / 2291 / W).